The primary structure comprises 261 residues: MDMALPEFSMRQLLEAGVHYGHQTQRWNPRMAEFIYGERNGIHIVDLTQTVPMLDAALQVVRDTVAKGGRVLFVGTKRQAQKAVADAAERSAQFYMNHRWLGGTLTNWKTVSQSIQRLKALDETLGSGAEGLTKKERLQMEREQAKLQASLGGIREMGGLPDLLFVIDVNKEDLAIAEAKKLGIPVVAVVDTNCSPKGVDYVIPGNDDAARAIALYCDLVSRAALDGMTAQMGAAGVDLGALEASVEEELTGETAEEAAEA.

This sequence belongs to the universal ribosomal protein uS2 family.

This chain is Small ribosomal subunit protein uS2, found in Paracoccus denitrificans (strain Pd 1222).